Here is a 224-residue protein sequence, read N- to C-terminus: Type II restriction enzyme BstVI (224 aa).

The protein belongs to the XhoI type II restriction endonuclease family.

The catalysed reaction is Endonucleolytic cleavage of DNA to give specific double-stranded fragments with terminal 5'-phosphates.. A P subtype restriction enzyme that recognizes the double-stranded sequence 5'-CTCGAG-3' and cleaves after C-1. The sequence is that of Type II restriction enzyme BstVI from Geobacillus stearothermophilus (Bacillus stearothermophilus).